Consider the following 405-residue polypeptide: MITGPISNLSGESGFENVFIFISDSLRYDALPERIRSKGLTIKTIAAAPWTASSIPSLMSGKYPSSHNVWMFEDRLPQRPPLLSEQEDWDAGFDSEKHWLKFESSEKPPVKMLRLDGEQKLADIEPPFVHVVHDLGPHAPYGFENDEYETGPYFRDYNDPKDLQQKYQNDAEKSANYFLEILDKLENLGLREDTLCVFTSDHGELLGEGGRLGGKWGHSTPLCPELLEVPMTFIGKGIPKGETLSGVASGVDLAPTCLSAVGREIGHVDGIDLWAETPDEDRRVRSDVWQRYNAFGRELPVYVASGLWDNDGGWVKHRRSKLLRMAYYGYDVFLGDYAPPARSTTGISELVSGLKFWGRDWEKFGNTTISLQEAQKELSDELVRSEDSVELSEEQTEHLEALGYV.

Ca(2+) is bound by residues Asp24, Asp201, and His202.

This sequence belongs to the sulfatase family. Ca(2+) serves as cofactor.

It participates in protein modification; protein glycosylation. It functions in the pathway cell surface structure biogenesis; S-layer biogenesis. Functionally, involved in N-glycan biosynthetic pathway that takes place under low-salt conditions (1.75 M instead of 3.4 M). Participates in the formation of the tetrasaccharide present at 'Asn-532' of S-layer glycoprotein Csg, consisting of a sulfated hexose, 2 hexoses and rhamnose. Mediates sulfation of sugar 1 in the tetrasaccharide. This chain is Low-salt glycan biosynthesis sulfotransferase Agl7, found in Haloferax volcanii (strain ATCC 29605 / DSM 3757 / JCM 8879 / NBRC 14742 / NCIMB 2012 / VKM B-1768 / DS2) (Halobacterium volcanii).